The sequence spans 387 residues: S-adenosylmethionine synthase (387 aa).

His-19 contacts ATP. Mg(2+) is bound at residue Asp-21. A K(+)-binding site is contributed by Glu-47. Gln-103 serves as a coordination point for L-methionine. A flexible loop region spans residues 103–113 (QSPDIAQGVEL). ATP is bound by residues 167 to 169 (DMK), 233 to 234 (RF), Asp-242, 248 to 249 (RK), Ala-265, and Lys-269. Asp-242 serves as a coordination point for L-methionine. An L-methionine-binding site is contributed by Lys-273.

It belongs to the AdoMet synthase family. In terms of assembly, homotetramer; dimer of dimers. Mg(2+) is required as a cofactor. Requires K(+) as cofactor.

Its subcellular location is the cytoplasm. It catalyses the reaction L-methionine + ATP + H2O = S-adenosyl-L-methionine + phosphate + diphosphate. The protein operates within amino-acid biosynthesis; S-adenosyl-L-methionine biosynthesis; S-adenosyl-L-methionine from L-methionine: step 1/1. Its function is as follows. Catalyzes the formation of S-adenosylmethionine (AdoMet) from methionine and ATP. The overall synthetic reaction is composed of two sequential steps, AdoMet formation and the subsequent tripolyphosphate hydrolysis which occurs prior to release of AdoMet from the enzyme. This is S-adenosylmethionine synthase from Mycoplasma mycoides subsp. mycoides SC (strain CCUG 32753 / NCTC 10114 / PG1).